Reading from the N-terminus, the 440-residue chain is Tetratricopeptide repeat protein 5 (440 aa).

5 TPR repeats span residues 7 to 61, 68 to 98, 103 to 130, 136 to 174, and 179 to 216; these read EEVK…EEVV, AQVL…AVKL, VEAW…SGAL, KVSL…AVQM, and GRSW…AEKV. The Nuclear export signal motif lies at 13–24; it reads LQKLQELVDQLY. Phosphoserine; by ATM is present on serine 203. Phosphoserine; by CHEK2 is present on serine 221. The TPR 6 repeat unit spans residues 224 to 253; sequence PDLHLNRATLHKYEESYGEALEGFSRAAAL. The segment at 285-287 is mediates interaction with 28S rRNA of ribosome-coding tubulin; that stretch reads KTK.

As to quaternary structure, interacts with JMY and p300/EP300; the interaction occurs in the nucleus and augments the association between JMY and p300/EP300 in response to DNA damage. Forms a complex with HSF1 and p300/EP300; these interactions augment chromatin-bound HSF1 and p300/EP300 histone acetyltransferase activity, resulting in enhanced heat-shock-responsive transcription. Interacts with PRMT5; the interaction is DNA damage-dependent and promotes PRMT5 interaction with p53/TP53 and subsequent methylation. Interacts with JMY; the interaction occurs in the cytoplasm and results in the inhibition of JYM's nucleation activity. Interacts with ribosome-coding tubulin (via 60S subunit 28S rRNA and protein uL24/RPL26) and the N-terminal of nascent tubulin polypeptide (via alpha-tubulin MREC motif and beta-tubulin MREI motif); these interactions result in tubulin mRNA-targeted degradation. Interacts with ATP5F1B; the interaction occurs in the mitochondria and results in ATP production decrease. Interacts with p53/TP53; the interaction occurs in the mitochondria and results in increased apoptosis. Post-translationally, phosphorylation by ATM kinase induces nuclear accumulation while interfering with nuclear export, and phosphorylation by CHEK2 kinase enhances nuclear stability.

The protein resides in the nucleus. It localises to the cytoplasm. The protein localises to the cytoplasmic vesicle. Its subcellular location is the mitochondrion matrix. Functionally, cofactor involved in the regulation of various cellular mechanisms such as actin regulation, autophagy, chromatin regulation and DNA repair. In non-stress conditions, interacts with cofactor JMY in the cytoplasm which prevents JMY's actin nucleation activity and ability to activate the Arp2/3 complex. Acts as a negative regulator of nutrient stress-induced autophagy by preventing JMY's interaction with MAP1LC3B, thereby preventing autophagosome formation. Involves in tubulin autoregulation by promoting its degradation in response to excess soluble tubulin. To do so, associates with the active ribosome near the ribosome exit tunnel and with nascent tubulin polypeptides early during their translation, triggering tubulin mRNA-targeted degradation. Following DNA damage, phosphorylated by DNA damage responsive protein kinases ATM and CHEK2, leading to its nuclear accumulation and stability. Nuclear TTC5/STRAP promotes the assembly of a stress-responsive p53/TP53 coactivator complex, which includes the coactivators JMY and p300, thereby increasing p53/TP53-dependent transcription and apoptosis. Also recruits arginine methyltransferase PRMT5 to p53/TP53 when DNA is damaged, allowing PRMT5 to methylate p53/TP53. In DNA stress conditions, also prevents p53/TP53 degradation by E3 ubiquitin ligase MDM2. Upon heat-shock stress, forms a chromatin-associated complex with heat-shock factor 1 HSF1 and p300/EP300 to stimulate heat-shock-responsive transcription, thereby increasing cell survival. Mitochondrial TTC5/STRAP interacts with ATP synthase subunit beta ATP5F1B which decreased ATP synthase activity and lowers mitochondrial ATP production, thereby regulating cellular respiration and mitochondrial-dependent apoptosis. Mitochondrial TTC5/STRAP also regulates p53/TP53-mediated apoptosis. The chain is Tetratricopeptide repeat protein 5 from Homo sapiens (Human).